Reading from the N-terminus, the 133-residue chain is ATP synthase epsilon chain, chloroplastic (133 aa).

Belongs to the ATPase epsilon chain family. As to quaternary structure, F-type ATPases have 2 components, CF(1) - the catalytic core - and CF(0) - the membrane proton channel. CF(1) has five subunits: alpha(3), beta(3), gamma(1), delta(1), epsilon(1). CF(0) has three main subunits: a, b and c.

It localises to the plastid. The protein localises to the chloroplast thylakoid membrane. Produces ATP from ADP in the presence of a proton gradient across the membrane. This is ATP synthase epsilon chain, chloroplastic from Lotus japonicus (Lotus corniculatus var. japonicus).